The chain runs to 407 residues: MSKTKDVKKVVLAYSGGLDTSIILKWLQTELGAEVVTFTADLGQGGELEPARKKAEMMGIKDIRIVDVREEFVADFVFPMFRANTVYEGTYLLGTSIARPLISKHLVDIARETGADAIAHGATGKGNDQVRFELSAYALNPDIKVIAPWRDWSFKSRTDLINFAEQHQIPVAKDKRGEAPFSVDANLLHSSSEGKVLEDPWSEPPEFVHQRTVSPMDAPDKVTEIEIEFLKGDPIALNGKKLSPATMLAALNDLGRDNGIGRLDLVENRFVGMKSRGVYETPGGAILIVAHRAIESITLDRGAAHLKDEFMPRYAELIYNGFWFSPERLMLQAMIDKSQEDVEGTVRLKLYKGNVMVTGRKSKKTLYSDALVTFEDDRGAYDQKDAAGFIRLNALRLRTLAARNRKG.

Residues 13 to 21 and Ala40 contribute to the ATP site; that span reads AYSGGLDTS. 2 residues coordinate L-citrulline: Tyr91 and Ser96. Gly121 serves as a coordination point for ATP. L-aspartate-binding residues include Thr123, Asn127, and Asp128. Asn127 contacts L-citrulline. Positions 131, 182, 191, 267, and 279 each coordinate L-citrulline.

The protein belongs to the argininosuccinate synthase family. Type 1 subfamily. In terms of assembly, homotetramer.

The protein localises to the cytoplasm. The catalysed reaction is L-citrulline + L-aspartate + ATP = 2-(N(omega)-L-arginino)succinate + AMP + diphosphate + H(+). It participates in amino-acid biosynthesis; L-arginine biosynthesis; L-arginine from L-ornithine and carbamoyl phosphate: step 2/3. This Mesorhizobium japonicum (strain LMG 29417 / CECT 9101 / MAFF 303099) (Mesorhizobium loti (strain MAFF 303099)) protein is Argininosuccinate synthase.